A 189-amino-acid chain; its full sequence is Pyridoxal 5'-phosphate synthase subunit PdxT (189 aa).

47–49 is a binding site for L-glutamine; it reads GES. The Nucleophile role is filled by Cys-79. L-glutamine contacts are provided by residues Arg-106 and 135-136; that span reads IR. Active-site charge relay system residues include His-171 and Glu-173.

The protein belongs to the glutaminase PdxT/SNO family. In terms of assembly, in the presence of PdxS, forms a dodecamer of heterodimers. Only shows activity in the heterodimer.

It carries out the reaction aldehydo-D-ribose 5-phosphate + D-glyceraldehyde 3-phosphate + L-glutamine = pyridoxal 5'-phosphate + L-glutamate + phosphate + 3 H2O + H(+). The catalysed reaction is L-glutamine + H2O = L-glutamate + NH4(+). It participates in cofactor biosynthesis; pyridoxal 5'-phosphate biosynthesis. Its function is as follows. Catalyzes the hydrolysis of glutamine to glutamate and ammonia as part of the biosynthesis of pyridoxal 5'-phosphate. The resulting ammonia molecule is channeled to the active site of PdxS. The protein is Pyridoxal 5'-phosphate synthase subunit PdxT of Caldanaerobacter subterraneus subsp. tengcongensis (strain DSM 15242 / JCM 11007 / NBRC 100824 / MB4) (Thermoanaerobacter tengcongensis).